The following is a 382-amino-acid chain: Lipid-A-disaccharide synthase (382 aa).

Belongs to the LpxB family.

The enzyme catalyses 2-N,3-O-bis[(3R)-3-hydroxytetradecanoyl]-alpha-D-glucosaminyl 1-phosphate + UDP-2-N,3-O-bis[(3R)-3-hydroxytetradecanoyl]-alpha-D-glucosamine = lipid A disaccharide (E. coli) + UDP + H(+). It carries out the reaction a lipid X + a UDP-2-N,3-O-bis[(3R)-3-hydroxyacyl]-alpha-D-glucosamine = a lipid A disaccharide + UDP + H(+). It participates in glycolipid biosynthesis; lipid IV(A) biosynthesis; lipid IV(A) from (3R)-3-hydroxytetradecanoyl-[acyl-carrier-protein] and UDP-N-acetyl-alpha-D-glucosamine: step 5/6. Functionally, condensation of UDP-2,3-diacylglucosamine and 2,3-diacylglucosamine-1-phosphate to form lipid A disaccharide, a precursor of lipid A, a phosphorylated glycolipid that anchors the lipopolysaccharide to the outer membrane of the cell. The chain is Lipid-A-disaccharide synthase from Shigella dysenteriae serotype 1 (strain Sd197).